The sequence spans 474 residues: Hydrogenobyrinate a,c-diamide synthase (474 aa).

Residues 269-459 enclose the GATase cobBQ-type domain; sequence VVAVAGGQAF…LHTHWAGCPQ (191 aa). Residue C352 is the Nucleophile of the active site.

The protein belongs to the CobB/CbiA family. It depends on Mg(2+) as a cofactor.

It carries out the reaction hydrogenobyrinate + 2 L-glutamine + 2 ATP + 2 H2O = hydrogenobyrinate a,c-diamide + 2 L-glutamate + 2 ADP + 2 phosphate + 2 H(+). It functions in the pathway cofactor biosynthesis; adenosylcobalamin biosynthesis; cob(II)yrinate a,c-diamide from precorrin-2 (aerobic route): step 9/10. In terms of biological role, catalyzes the ATP-dependent amidation of the two carboxylate groups at positions a and c of hydrogenobyrinate, using either L-glutamine or ammonia as the nitrogen source. In Thermobifida fusca (strain YX), this protein is Hydrogenobyrinate a,c-diamide synthase.